A 329-amino-acid chain; its full sequence is DNA-directed RNA polymerase subunit alpha (329 aa).

The interval 1–231 (MQNSLLKPKA…EQLAVFAQLE (231 aa)) is alpha N-terminal domain (alpha-NTD). The tract at residues 249–329 (FDPILLRPVD…SWPPAALEKR (81 aa)) is alpha C-terminal domain (alpha-CTD).

This sequence belongs to the RNA polymerase alpha chain family. In terms of assembly, homodimer. The RNAP catalytic core consists of 2 alpha, 1 beta, 1 beta' and 1 omega subunit. When a sigma factor is associated with the core the holoenzyme is formed, which can initiate transcription.

The catalysed reaction is RNA(n) + a ribonucleoside 5'-triphosphate = RNA(n+1) + diphosphate. Functionally, DNA-dependent RNA polymerase catalyzes the transcription of DNA into RNA using the four ribonucleoside triphosphates as substrates. This Albidiferax ferrireducens (strain ATCC BAA-621 / DSM 15236 / T118) (Rhodoferax ferrireducens) protein is DNA-directed RNA polymerase subunit alpha.